The following is a 305-amino-acid chain: tRNA uridine(34) hydroxylase (305 aa).

Positions 126–220 (CDPEVTVIDT…YLEEVPAQES (95 aa)) constitute a Rhodanese domain. The active-site Cysteine persulfide intermediate is C180.

The protein belongs to the TrhO family.

The enzyme catalyses uridine(34) in tRNA + AH2 + O2 = 5-hydroxyuridine(34) in tRNA + A + H2O. Functionally, catalyzes oxygen-dependent 5-hydroxyuridine (ho5U) modification at position 34 in tRNAs. The chain is tRNA uridine(34) hydroxylase from Nostoc punctiforme (strain ATCC 29133 / PCC 73102).